The sequence spans 511 residues: E3 ubiquitin-protein ligase TRIM7 (511 aa).

Residues 29-82 form an RING-type zinc finger; that stretch reads CSICLELFREPVSVECGHSFCRACIGRCWERPGAGSVGAATRAPPFPLPCPQCR. Serine 107 is subject to Phosphoserine; by RPS6KA5. A B box-type zinc finger spans residues 125-166; sequence AAAARCGQHGEPFKLYCQDDGRAICVVCDRAREHREHAVLPL. Residues cysteine 130, histidine 133, cysteine 152, and histidine 158 each coordinate Zn(2+). Residues 166–263 adopt a coiled-coil conformation; the sequence is LDEAVQEAKE…AQLGVEITQL (98 aa). The region spanning 324–511 is the B30.2/SPRY domain; that stretch reads MLKKFKEDLR…STGTYLRIWP (188 aa).

Belongs to the TRIM/RBCC family. In terms of assembly, forms homodimers. Interacts with GNIP2. Interacts with GYG1. Interacts with RNF187 (via C-terminus). In terms of processing, phosphorylated at Ser-107 by RPS6KA5/MSK1, which stimulates the ubiquitin ligase activity. Post-translationally, auto-ubiquitinates via 'Lys-63'-linked polyubiquitination. Skeletal muscle and placenta, at lower levels in heart, brain and pancreas. Isoform 1 is widely expressed with high level in testis, kidney and heart.

The protein localises to the nucleus. Its subcellular location is the cytoplasm. It localises to the golgi apparatus. It catalyses the reaction S-ubiquitinyl-[E2 ubiquitin-conjugating enzyme]-L-cysteine + [acceptor protein]-L-lysine = [E2 ubiquitin-conjugating enzyme]-L-cysteine + N(6)-ubiquitinyl-[acceptor protein]-L-lysine.. It functions in the pathway protein modification; protein ubiquitination. In terms of biological role, E3 ubiquitin-protein ligase that have both tumor-promoting and tumor-suppressing activities and functions in several biological processes including innate immunity, regulation of ferroptosis as well as cell proliferation and migration. Acts as an antiviral effector against multiple viruses by targeting specific viral proteins for ubiquitination and degradation including norovirus NTPase protein or SARS-CoV-2 NSP5 and NSP8 proteins. Mechanistically, recognizes the C-terminal glutamine-containing motif usually generated by viral proteases that process the polyproteins and trigger their ubiquitination and subsequent degradation. Mediates 'Lys-63'-linked polyubiquitination and stabilization of the JUN coactivator RNF187 in response to growth factor signaling via the MEK/ERK pathway, thereby regulating JUN transactivation and cellular proliferation. Promotes the TLR4-mediated signaling activation through its E3 ligase domain leading to production of pro-inflammatory cytokines and type I interferon. Also plays a negative role in the regulation of exogenous cytosolic DNA virus-triggered immune response. Mechanistically, enhances the 'Lys-48'-linked ubiquitination of STING1 leading to its proteasome-dependent degradation. Mediates the ubiquitination of the SIN3-HDAC chromatin remodeling complex component BRMS1. Modulates NCOA4-mediated ferritinophagy and ferroptosis in glioblastoma cells by ubiquitinating NCOA4, leading to its degradation. (Microbial infection) Promotes Zika virus replication by mediating envelope protein E ubiquitination. In Homo sapiens (Human), this protein is E3 ubiquitin-protein ligase TRIM7 (TRIM7).